Reading from the N-terminus, the 482-residue chain is Glutamyl-tRNA(Gln) amidotransferase subunit A (482 aa).

Active-site charge relay system residues include lysine 75 and serine 150. The active-site Acyl-ester intermediate is the serine 174.

It belongs to the amidase family. GatA subfamily. Heterotrimer of A, B and C subunits.

It carries out the reaction L-glutamyl-tRNA(Gln) + L-glutamine + ATP + H2O = L-glutaminyl-tRNA(Gln) + L-glutamate + ADP + phosphate + H(+). Functionally, allows the formation of correctly charged Gln-tRNA(Gln) through the transamidation of misacylated Glu-tRNA(Gln) in organisms which lack glutaminyl-tRNA synthetase. The reaction takes place in the presence of glutamine and ATP through an activated gamma-phospho-Glu-tRNA(Gln). The sequence is that of Glutamyl-tRNA(Gln) amidotransferase subunit A from Thermosynechococcus vestitus (strain NIES-2133 / IAM M-273 / BP-1).